Consider the following 441-residue polypeptide: UDP-N-acetylmuramoylalanine--D-glutamate ligase (441 aa).

Position 129–135 (glycine 129–threonine 135) interacts with ATP.

This sequence belongs to the MurCDEF family.

Its subcellular location is the cytoplasm. The enzyme catalyses UDP-N-acetyl-alpha-D-muramoyl-L-alanine + D-glutamate + ATP = UDP-N-acetyl-alpha-D-muramoyl-L-alanyl-D-glutamate + ADP + phosphate + H(+). It functions in the pathway cell wall biogenesis; peptidoglycan biosynthesis. Functionally, cell wall formation. Catalyzes the addition of glutamate to the nucleotide precursor UDP-N-acetylmuramoyl-L-alanine (UMA). The protein is UDP-N-acetylmuramoylalanine--D-glutamate ligase of Zymomonas mobilis subsp. mobilis (strain ATCC 31821 / ZM4 / CP4).